The following is a 229-amino-acid chain: UPF0173 metal-dependent hydrolase SAOUHSC_01815 (229 aa).

Belongs to the UPF0173 family.

The sequence is that of UPF0173 metal-dependent hydrolase SAOUHSC_01815 from Staphylococcus aureus (strain NCTC 8325 / PS 47).